The chain runs to 113 residues: Large ribosomal subunit protein P2B (113 aa).

Residues 66–113 are disordered; the sequence is PSGGGAIDMGAPAAVAGGGAAPAEEAKKEEKVEEKEESDEDMGFSLFD. The span at 89–99 shows a compositional bias: basic and acidic residues; the sequence is EEAKKEEKVEE.

Belongs to the eukaryotic ribosomal protein P1/P2 family. In terms of assembly, P1 and P2 exist as dimers at the large ribosomal subunit. Phosphorylated.

Plays an important role in the elongation step of protein synthesis. The polypeptide is Large ribosomal subunit protein P2B (RPP2B) (Zea mays (Maize)).